The following is a 941-amino-acid chain: RNA-directed RNA polymerase (941 aa).

The interval S875–P918 is disordered. Over residues M905–P918 the composition is skewed to low complexity.

In terms of assembly, forms a ribonucleoprotein complex with the 23S RNA, where a single polymerase molecule binds to a single viral RNA genome. Since the viral RNA is not encapsidated, ribonucleoprotein complex formation appears to be the strategy to survive in the host as persistent virus.

Its subcellular location is the host cytoplasm. It carries out the reaction RNA(n) + a ribonucleoside 5'-triphosphate = RNA(n+1) + diphosphate. Functionally, RNA-directed RNA polymerase that replicates the viral (+) and (-) genome. The sequence is that of RNA-directed RNA polymerase from Saccharomyces 23S RNA narnavirus (ScNV-23S).